The primary structure comprises 562 residues: MTNSSATSNPQPSDVEIAQAHTLEPITTIAERAGIPEAALIPYGRTKAKIDVPALRAEREGVNKKGKLVLVTAMSPTPAGEGKSTVLIGLADAVRTAGRQTMVAIREPSQGPVMGIKGGAAGGGYAQIVPMEDINLHFTGDMHAITAATNTLAAMVDNHVQHGNALGIDPRRVTWRRCLDVNDRSLRHVVTGLGGPGQGTPREGGFDITAASEIMAILCLATDLEDLKKRIGRIVVGQTYDRRPVTAGDLKCAGAITALLRDAINPNLVQTLGGTPALVHGGPFANIAHGCNSLIATTTALDLSEVVLTEAGFGSDLGAEKFFDIKSRAGDLDVAATVVVATIRSLKHNGDSVLKAGLANLERHVSNIRKFGVEPVVALNLFSSDTAAERSMVADWGEQFGVRVVECSVWAEGGAGAADLATAVLEVVDGVSDEDASSSSHQIYQPVDGVEATLHTLATEIYGAADVQFGPQALKDLAFLKDNGWDKLPVCVSKTQYSFSDDPSALGAPSGHTLHVRELVPRIGAGFVVALTGDVMTLPGLPKKPAAERIDVNAQGVISGLF.

T77–S84 is an ATP binding site.

The protein belongs to the formate--tetrahydrofolate ligase family.

It catalyses the reaction (6S)-5,6,7,8-tetrahydrofolate + formate + ATP = (6R)-10-formyltetrahydrofolate + ADP + phosphate. Its pathway is one-carbon metabolism; tetrahydrofolate interconversion. The polypeptide is Formate--tetrahydrofolate ligase (Corynebacterium jeikeium (strain K411)).